Reading from the N-terminus, the 117-residue chain is V-type proton ATPase subunit G (117 aa).

Belongs to the V-ATPase G subunit family. As to quaternary structure, V-ATPase is a heteromultimeric enzyme made up of two complexes: the ATP-hydrolytic V1 complex and the proton translocation V0 complex. The V1 complex consists of three catalytic AB heterodimers that form a heterohexamer, three peripheral stalks each consisting of EG heterodimers, one central rotor including subunits D and F, and the regulatory subunits C and H. The proton translocation complex V0 consists of the proton transport subunit a, a ring of proteolipid subunits c9c'', rotary subunit d, subunits e and f, and the accessory subunits VhaAC45 and ATP6AP2.

Subunit of the V1 complex of vacuolar(H+)-ATPase (V-ATPase), a multisubunit enzyme composed of a peripheral complex (V1) that hydrolyzes ATP and a membrane integral complex (V0) that translocates protons. V-ATPase is responsible for acidifying and maintaining the pH of intracellular compartments and in some cell types, is targeted to the plasma membrane, where it is responsible for acidifying the extracellular environment. In enterocytes, acts as part of a pHCl-2 sensory pathway which mediates Tor-dependent larval growth and metabolism in response to zinc availability. Likely acts in maintaining enterocyte lysosomal acidification which consequently promotes Tor activation at the lysosome membrane. This is V-type proton ATPase subunit G (Vha13) from Drosophila melanogaster (Fruit fly).